The chain runs to 270 residues: Protein N-terminal and lysine N-methyltransferase EFM7 (270 aa).

The interval 1 to 45 (MSDIESLNGGDLFAEPSDFYKPPPEPHFATYTRDDVPESSTSQQK) is disordered. S-adenosyl-L-methionine is bound by residues Trp63, 89–91 (GAA), Asp111, Trp158, and Ser182.

This sequence belongs to the class I-like SAM-binding methyltransferase superfamily. EFM7 family.

The protein localises to the cytoplasm. S-adenosyl-L-methionine-dependent protein methyltransferase that trimethylates the N-terminal glycine 'Gly-2' of elongation factor 1-alpha, before also catalyzing the mono- and dimethylation of 'Lys-3'. This is Protein N-terminal and lysine N-methyltransferase EFM7 from Kluyveromyces lactis (strain ATCC 8585 / CBS 2359 / DSM 70799 / NBRC 1267 / NRRL Y-1140 / WM37) (Yeast).